Consider the following 311-residue polypeptide: Methionyl-tRNA formyltransferase (311 aa).

A (6S)-5,6,7,8-tetrahydrofolate-binding site is contributed by 110–113; the sequence is SLLP.

This sequence belongs to the Fmt family.

It catalyses the reaction L-methionyl-tRNA(fMet) + (6R)-10-formyltetrahydrofolate = N-formyl-L-methionyl-tRNA(fMet) + (6S)-5,6,7,8-tetrahydrofolate + H(+). Functionally, attaches a formyl group to the free amino group of methionyl-tRNA(fMet). The formyl group appears to play a dual role in the initiator identity of N-formylmethionyl-tRNA by promoting its recognition by IF2 and preventing the misappropriation of this tRNA by the elongation apparatus. This Streptococcus gordonii (strain Challis / ATCC 35105 / BCRC 15272 / CH1 / DL1 / V288) protein is Methionyl-tRNA formyltransferase.